The primary structure comprises 281 residues: Probable endonuclease 4 (281 aa).

Zn(2+) contacts are provided by His69, His109, Glu145, Asp179, His182, His216, Asp229, His231, and Glu261.

The protein belongs to the AP endonuclease 2 family. Zn(2+) is required as a cofactor.

The catalysed reaction is Endonucleolytic cleavage to 5'-phosphooligonucleotide end-products.. In terms of biological role, endonuclease IV plays a role in DNA repair. It cleaves phosphodiester bonds at apurinic or apyrimidinic (AP) sites, generating a 3'-hydroxyl group and a 5'-terminal sugar phosphate. The sequence is that of Probable endonuclease 4 from Parabacteroides distasonis (strain ATCC 8503 / DSM 20701 / CIP 104284 / JCM 5825 / NCTC 11152).